A 164-amino-acid chain; its full sequence is uncharacterized protein (164 aa).

Residue Ser-117 is modified to Phosphoserine.

This is an uncharacterized protein from Bacillus subtilis (strain 168).